Reading from the N-terminus, the 34-residue chain is Thermomycolin (34 aa).

Catalysis depends on serine 33, which acts as the Charge relay system.

It belongs to the peptidase S8 family.

It localises to the secreted. The catalysed reaction is Rather non-specific hydrolysis of proteins. Preferential cleavage: -Ala-|-Xaa-, -Tyr-|-Xaa-, -Phe-|-Xaa- in small molecular substrates.. Functionally, this is an extracellular proteinase with a general specificity for apolar residues. This chain is Thermomycolin, found in Malbranchea cinnamomea (Thermophilic fungus).